The following is a 293-amino-acid chain: 4-diphosphocytidyl-2-C-methyl-D-erythritol kinase (293 aa).

Lys-23 is a catalytic residue. Residue 109–119 participates in ATP binding; sequence PVAAGIGGGSA. Asp-151 is a catalytic residue.

The protein belongs to the GHMP kinase family. IspE subfamily.

It catalyses the reaction 4-CDP-2-C-methyl-D-erythritol + ATP = 4-CDP-2-C-methyl-D-erythritol 2-phosphate + ADP + H(+). It functions in the pathway isoprenoid biosynthesis; isopentenyl diphosphate biosynthesis via DXP pathway; isopentenyl diphosphate from 1-deoxy-D-xylulose 5-phosphate: step 3/6. Catalyzes the phosphorylation of the position 2 hydroxy group of 4-diphosphocytidyl-2C-methyl-D-erythritol. The chain is 4-diphosphocytidyl-2-C-methyl-D-erythritol kinase from Rhizorhabdus wittichii (strain DSM 6014 / CCUG 31198 / JCM 15750 / NBRC 105917 / EY 4224 / RW1) (Sphingomonas wittichii).